The following is a 185-amino-acid chain: Small ribosomal subunit protein uS7 (185 aa).

This sequence belongs to the universal ribosomal protein uS7 family. In terms of assembly, part of the 30S ribosomal subunit.

One of the primary rRNA binding proteins, it binds directly to 16S rRNA where it nucleates assembly of the head domain of the 30S subunit. Is located at the subunit interface close to the decoding center. The polypeptide is Small ribosomal subunit protein uS7 (Methanothrix thermoacetophila (strain DSM 6194 / JCM 14653 / NBRC 101360 / PT) (Methanosaeta thermophila)).